An 86-amino-acid polypeptide reads, in one-letter code: MTKTIFISTKENTGSIQFQIVNFTKKICKLTNHLKLHKKDYLSQRGLRQMLGKRQRLLSYLSKINLTSYNDLILKLKIREAKKDLF.

The protein belongs to the universal ribosomal protein uS15 family. As to quaternary structure, part of the 30S ribosomal subunit.

The protein resides in the plastid. In Cuscuta obtusiflora (Peruvian dodder), this protein is Small ribosomal subunit protein uS15c (rps15).